The chain runs to 293 residues: Transcription elongation factor S-II (293 aa).

A TFIIS N-terminal domain is found at 4 to 81; that stretch reads ADIRSAKAAL…KKWKADVSKG (78 aa). A disordered region spans residues 81–123; sequence GRPLKTTTTTSSTPSKHADVGSQAQKQVQKQSSSGQRTFKSDN. The span at 100 to 116 shows a compositional bias: low complexity; it reads VGSQAQKQVQKQSSSGQ. A TFIIS central domain is found at 133-248; sequence IRNNCIGLMY…HAQGAKPQKA (116 aa). A TFIIS-type zinc finger spans residues 251-291; sequence DLFTCGKCKQKKVSYYQMQTRSADEPMTTFCECTVCGNRWK. Cys-255, Cys-258, Cys-283, and Cys-286 together coordinate Zn(2+).

The protein belongs to the TFS-II family.

The protein localises to the nucleus. Necessary for efficient RNA polymerase II transcription elongation past template-encoded arresting sites. The arresting sites in DNA have the property of trapping a certain fraction of elongating RNA polymerases that pass through, resulting in locked ternary complexes. Cleavage of the nascent transcript by S-II allows the resumption of elongation from the new 3'-terminus. The chain is Transcription elongation factor S-II (tfs1) from Schizosaccharomyces pombe (strain 972 / ATCC 24843) (Fission yeast).